A 98-amino-acid polypeptide reads, in one-letter code: Putative membrane protein insertion efficiency factor (98 aa).

This sequence belongs to the UPF0161 family.

The protein localises to the cell inner membrane. Its function is as follows. Could be involved in insertion of integral membrane proteins into the membrane. The sequence is that of Putative membrane protein insertion efficiency factor from Cupriavidus pinatubonensis (strain JMP 134 / LMG 1197) (Cupriavidus necator (strain JMP 134)).